A 197-amino-acid chain; its full sequence is Ribonuclease HII (197 aa).

Residues glycine 11 to leucine 197 enclose the RNase H type-2 domain. Residues aspartate 17, glutamate 18, and aspartate 109 each coordinate a divalent metal cation.

It belongs to the RNase HII family. It depends on Mn(2+) as a cofactor. Mg(2+) is required as a cofactor.

The protein resides in the cytoplasm. The enzyme catalyses Endonucleolytic cleavage to 5'-phosphomonoester.. In terms of biological role, endonuclease that specifically degrades the RNA of RNA-DNA hybrids. The chain is Ribonuclease HII from Edwardsiella ictaluri (strain 93-146).